We begin with the raw amino-acid sequence, 115 residues long: NADH-ubiquinone oxidoreductase chain 3 (115 aa).

The next 3 helical transmembrane spans lie at 4–24, 55–75, and 84–104; these read LMILSVNIILSTCLIMIAFWL, FFLVAITFLLFDLEIALLLPL, and INMMMSTAFILVSILALGLAY.

The protein belongs to the complex I subunit 3 family. Core subunit of respiratory chain NADH dehydrogenase (Complex I) which is composed of 45 different subunits. Interacts with TMEM186. Interacts with TMEM242.

Its subcellular location is the mitochondrion inner membrane. It carries out the reaction a ubiquinone + NADH + 5 H(+)(in) = a ubiquinol + NAD(+) + 4 H(+)(out). Core subunit of the mitochondrial membrane respiratory chain NADH dehydrogenase (Complex I) which catalyzes electron transfer from NADH through the respiratory chain, using ubiquinone as an electron acceptor. Essential for the catalytic activity of complex I. The polypeptide is NADH-ubiquinone oxidoreductase chain 3 (Podomys floridanus (Florida mouse)).